The primary structure comprises 402 residues: Caspase-1 (402 aa).

A CARD domain is found at 1–91 (MADKVLRAKR…YLAEILELQS (91 aa)). A propeptide spanning residues 1–118 (MADKVLRAKR…PFSSETKEKL (118 aa)) is cleaved from the precursor. Active-site residues include His236 and Cys284. Positions 297–314 (SVGNSEEGFLTDAIFEDD) are excised as a propeptide. Residue Ser301 is modified to Phosphoserine.

It belongs to the peptidase C14A family. Heterotetramer that consists of two anti-parallel arranged heterodimers, each one formed by a 20 kDa (Caspase-1 subunit p20) and a 10 kDa (Caspase-1 subunit p10) subunit. May be a component of the inflammasome, a protein complex which also includes PYCARD, CARD8 and NLRP2 and whose function would be the activation of pro-inflammatory caspases. Component of the AIM2 PANoptosome complex, a multiprotein complex that drives inflammatory cell death (PANoptosis). Both the p10 and p20 subunits interact with MEFV. Interacts with CARD17P/INCA and CARD18. Interacts with SERPINB1; this interaction regulates CASP1 activity. In terms of assembly, heterotetramer that consists of two anti-parallel arranged heterodimers, each one formed by a 20 kDa (Caspase-1 subunit p20) and a 10 kDa (Caspase-1 subunit p10) subunit. The two subunits are derived from the precursor sequence by an autocatalytic mechanism. In terms of processing, ubiquitinated via 'Lys-11'-linked polyubiquitination. Deubiquitinated by USP8.

It localises to the cytoplasm. It is found in the cell membrane. It carries out the reaction Strict requirement for an Asp residue at position P1 and has a preferred cleavage sequence of Tyr-Val-Ala-Asp-|-.. In terms of biological role, thiol protease involved in a variety of inflammatory processes by proteolytically cleaving other proteins, such as the precursors of the inflammatory cytokines interleukin-1 beta (IL1B) and interleukin 18 (IL18) as well as the pyroptosis inducer Gasdermin-D (GSDMD), into active mature peptides. Plays a key role in cell immunity as an inflammatory response initiator: once activated through formation of an inflammasome complex, it initiates a pro-inflammatory response through the cleavage of the two inflammatory cytokines IL1B and IL18, releasing the mature cytokines which are involved in a variety of inflammatory processes. Cleaves a tetrapeptide after an Asp residue at position P1. Also initiates pyroptosis, a programmed lytic cell death pathway, through cleavage of GSDMD. In contrast to cleavage of interleukin IL1B, recognition and cleavage of GSDMD is not strictly dependent on the consensus cleavage site but depends on an exosite interface on CASP1 that recognizes and binds the Gasdermin-D, C-terminal (GSDMD-CT) part. Cleaves and activates CASP7 in response to bacterial infection, promoting plasma membrane repair. Upon inflammasome activation, during DNA virus infection but not RNA virus challenge, controls antiviral immunity through the cleavage of CGAS, rendering it inactive. In apoptotic cells, cleaves SPHK2 which is released from cells and remains enzymatically active extracellularly. The polypeptide is Caspase-1 (Casp1) (Rattus norvegicus (Rat)).